Consider the following 211-residue polypeptide: ATP phosphoribosyltransferase (211 aa).

The protein belongs to the ATP phosphoribosyltransferase family. Short subfamily. In terms of assembly, heteromultimer composed of HisG and HisZ subunits.

It localises to the cytoplasm. The enzyme catalyses 1-(5-phospho-beta-D-ribosyl)-ATP + diphosphate = 5-phospho-alpha-D-ribose 1-diphosphate + ATP. It participates in amino-acid biosynthesis; L-histidine biosynthesis; L-histidine from 5-phospho-alpha-D-ribose 1-diphosphate: step 1/9. Its function is as follows. Catalyzes the condensation of ATP and 5-phosphoribose 1-diphosphate to form N'-(5'-phosphoribosyl)-ATP (PR-ATP). Has a crucial role in the pathway because the rate of histidine biosynthesis seems to be controlled primarily by regulation of HisG enzymatic activity. This chain is ATP phosphoribosyltransferase, found in Pseudomonas fluorescens (strain Pf0-1).